Reading from the N-terminus, the 331-residue chain is Glutamyl-Q tRNA(Asp) synthetase (331 aa).

Residues Met1–Thr30 show a composition bias toward polar residues. Positions Met1–Phe36 are disordered. L-glutamate is bound by residues Arg35–Ser39 and Glu71. A 'HIGH' region motif is present at residues Pro38–Ser48. The Zn(2+) site is built by Cys127, Cys129, Tyr141, and Cys145. 2 residues coordinate L-glutamate: Tyr198 and Arg216. The 'KMSKS' region motif lies at Lys254–Gln258. Residue Lys257 coordinates ATP.

Belongs to the class-I aminoacyl-tRNA synthetase family. GluQ subfamily. It depends on Zn(2+) as a cofactor.

Catalyzes the tRNA-independent activation of glutamate in presence of ATP and the subsequent transfer of glutamate onto a tRNA(Asp). Glutamate is transferred on the 2-amino-5-(4,5-dihydroxy-2-cyclopenten-1-yl) moiety of the queuosine in the wobble position of the QUC anticodon. This chain is Glutamyl-Q tRNA(Asp) synthetase, found in Yersinia pseudotuberculosis serotype I (strain IP32953).